We begin with the raw amino-acid sequence, 285 residues long: MLERLSLYARLVRIDKPIGTLLLLWPTLWAMWMAAGGPPAWGLFWIFVAGTFLMRSAGCAINDWADRDFDKHVKRTRERPLTAGKIAAWEALAVAAVLALVAFALVLPLNALTKWLAVVAAVVAGTYPFFKRFFAIPQAYLGIAFGFGIPMAFAAIQDQVPPVAWLMLLANVFWAVAYDTAYAMVDRDDDLLIGMKTSAITFGRFDVAAIMLCYAAFLALMAWAGVLLGLGWPYWVGLAAAAGCAGYHYTLIRDRDRMRCFAAFRHNNWLGACVFAGTAVAYAIR.

Transmembrane regions (helical) follow at residues 28–48 (LWAMWMAAGGPPAWGLFWIFV), 86–106 (IAAWEALAVAAVLALVAFALV), 110–130 (NALTKWLAVVAAVVAGTYPFF), 133–153 (FFAIPQAYLGIAFGFGIPMAF), 165–185 (WLMLLANVFWAVAYDTAYAMV), 210–230 (IMLCYAAFLALMAWAGVLLGL), 232–252 (WPYWVGLAAAAGCAGYHYTLI), and 262–284 (AAFRHNNWLGACVFAGTAVAYAI).

Belongs to the UbiA prenyltransferase family. The cofactor is Mg(2+).

It is found in the cell inner membrane. The enzyme catalyses all-trans-octaprenyl diphosphate + 4-hydroxybenzoate = 4-hydroxy-3-(all-trans-octaprenyl)benzoate + diphosphate. It participates in cofactor biosynthesis; ubiquinone biosynthesis. Functionally, catalyzes the prenylation of para-hydroxybenzoate (PHB) with an all-trans polyprenyl group. Mediates the second step in the final reaction sequence of ubiquinone-8 (UQ-8) biosynthesis, which is the condensation of the polyisoprenoid side chain with PHB, generating the first membrane-bound Q intermediate 3-octaprenyl-4-hydroxybenzoate. This Cupriavidus necator (strain ATCC 17699 / DSM 428 / KCTC 22496 / NCIMB 10442 / H16 / Stanier 337) (Ralstonia eutropha) protein is 4-hydroxybenzoate octaprenyltransferase.